A 211-amino-acid polypeptide reads, in one-letter code: MADS-box protein AGL72 (211 aa).

In terms of domain architecture, MADS-box spans 1–61; that stretch reads MVRGKIEIKK…GRLYEFASSD (61 aa). The K-box domain maps to 88–187; the sequence is VQGLKKEMVT…LCQVGERPMG (100 aa).

It localises to the nucleus. Its function is as follows. MADS-box transcription factor that acts with AGL42 and AGL71 in the control of flowering time. Promotes flowering at the shoot apical and axillary meristems. Seems to act through a gibberellin-dependent pathway. Interacts genetically with SOC1 and its expression is directly regulated by SOC1. The protein is MADS-box protein AGL72 (AGL72) of Arabidopsis thaliana (Mouse-ear cress).